Consider the following 609-residue polypeptide: mRNA-decapping enzyme 1B (609 aa).

Ala2 is subject to N-acetylalanine. Residue Ser147 is modified to Phosphoserine. Position 191 is a phosphotyrosine (Tyr191). Disordered stretches follow at residues 201 to 222 and 243 to 264; these read PVKP…LDPE and TVEP…LPIR. Polar residues predominate over residues 205–219; the sequence is SENQQQRIPQPNQTL. Residues Ser272 and Ser333 each carry the phosphoserine modification. Disordered regions lie at residues 326–345 and 359–438; these read TGPV…GVQN and TPGA…SSGV. A compositionally biased stretch (polar residues) spans 336 to 345; it reads NIGTSRGVQN. Residues 368 to 378 show a composition bias toward low complexity; that stretch reads PSTPAPASSAA. Position 389 is a phosphothreonine (Thr389). A compositionally biased stretch (polar residues) spans 418-438; the sequence is QSTLPRQTLPISGNQTGSSGV. 2 positions are modified to phosphoserine: Ser440 and Ser503.

It belongs to the DCP1 family. As to quaternary structure, interacts with DCP1A.

Its subcellular location is the cytoplasm. The protein localises to the nucleus. It catalyses the reaction a 5'-end (N(7)-methyl 5'-triphosphoguanosine)-ribonucleoside in mRNA + H2O = N(7)-methyl-GDP + a 5'-end phospho-ribonucleoside in mRNA + 2 H(+). Functionally, may play a role in the degradation of mRNAs, both in normal mRNA turnover and in nonsense-mediated mRNA decay. May remove the 7-methyl guanine cap structure from mRNA molecules, yielding a 5'-phosphorylated mRNA fragment and 7m-GDP. This chain is mRNA-decapping enzyme 1B (DCP1B), found in Pongo abelii (Sumatran orangutan).